Reading from the N-terminus, the 895-residue chain is MSPSQQQTSVFNALGSYADRIKDANGNFIKSSPSSSSSATPEPTSLSSSTSGKKAFSTATSKSGQQKQGSSPQPGAITAEDDGPWETVQSTRARQRTDRSEEKEKRGSSSKNWRERSHRDEKNQDDGEKRNGRERSKKEKGDKSNSAPFVGSATSSEKTAKSLSSSTKNAWGVTSSSQGENPIASNPGPKQKAQNDSTFRSSSAAAPVGPTTSTINEIIKQSEGSDEDNWRARPAKVEKNEKTEGPVSITQAQPQPQRQLAPPPSVNIWDLRKKMSVPVLVSPTSATSAVAGIPPKSDKEKSLTNGMVKEEDSGTGKSLSKKKSAAAAAAAGTSSTPPSIHDATLWPDIIQAAEVVKAGEDKKEKAKERLNSESASVAEESTIGIGKKPKWTPIPAHELLAAADHAAEQSRRQNRMEAKKRSSGREGGESGPTGSGAPGKSNKTRKGMPAAEGKKARKEGAQQKDGHASSKAGETIGAGTGKANGDVKETKEGDARSASQQESSSHRSGPSISASANTGIDSSLHARTKSTPNASTTPLPPHTFNLASSSNLPRSTRGRGEGRGSFGGGRARGGFRSSGALGHKGQLGHGYGHVHGQGQGFGYGYGSPPMGVAGLPVEGIIYAPLNPGAGAGAGASPNLYQRGYGMGFQPFYPAATAAASAGEGGPTGAAAGDAAGVYDPAAAVYGNMGMYKSASMPPPPMPQTVVPNLDPLRFYVLGQVEYYFSMQNLAMDFFLRQQMDSEGWIDIAMIASFNRIKSLTPETSIVRECMILSNYLEVREDKVRLSGAESHRWVLPDAAPSKFGPDPRSPSLAEGAESSEERDGAASGSQSGLVTAGEEGAQGLQASPRRMFGAQDVKDALMKSSALSTVNGEIKEKEEVKAMENEGEESENYEQ.

5 disordered regions span residues 24–265, 285–344, 359–590, 796–857, and 870–895; these read ANGN…PPPS, SATS…HDAT, GEDK…LGHG, PDAA…AQDV, and VNGEIKEKEEVKAMENEGEESENYEQ. Residues 31–75 are compositionally biased toward low complexity; sequence SSPSSSSSATPEPTSLSSSTSGKKAFSTATSKSGQQKQGSSPQPG. The span at 95–143 shows a compositional bias: basic and acidic residues; sequence QRTDRSEEKEKRGSSSKNWRERSHRDEKNQDDGEKRNGRERSKKEKGDK. Positions 152 to 170 are enriched in low complexity; the sequence is SATSSEKTAKSLSSSTKNA. Polar residues-rich tracts occupy residues 172-184 and 192-216; these read GVTSSSQGENPIA and KAQNDSTFRSSSAAAPVGPTTSTIN. Residues 228-244 show a composition bias toward basic and acidic residues; sequence DNWRARPAKVEKNEKTE. Residues 251 to 260 show a composition bias toward low complexity; sequence QAQPQPQRQL. The span at 296 to 314 shows a compositional bias: basic and acidic residues; it reads KSDKEKSLTNGMVKEEDSG. Positions 325 to 336 are enriched in low complexity; sequence AAAAAAAGTSST. Basic and acidic residues-rich tracts occupy residues 359–371, 405–428, 452–468, and 485–495; these read GEDKKEKAKERLN, HAAEQSRRQNRMEAKKRSSGREGG, EGKKARKEGAQQKDGHA, and GDVKETKEGDA. The segment covering 496–508 has biased composition (low complexity); the sequence is RSASQQESSSHRS. Residues 510–521 show a composition bias toward polar residues; that stretch reads PSISASANTGID. The span at 563 to 572 shows a compositional bias: gly residues; the sequence is RGSFGGGRAR. The HTH La-type RNA-binding domain occupies 706 to 796; it reads VPNLDPLRFY…GAESHRWVLP (91 aa). A Phosphoserine modification is found at Ser847. Over residues 873–884 the composition is skewed to basic and acidic residues; the sequence is EIKEKEEVKAME. Residues 885–895 show a composition bias toward acidic residues; sequence NEGEESENYEQ.

In terms of biological role, may act as an RNA-binding protein. In Cryptococcus neoformans var. grubii serotype A (strain H99 / ATCC 208821 / CBS 10515 / FGSC 9487) (Filobasidiella neoformans var. grubii), this protein is La RNA-binding domain-containing protein LHP1.